Here is a 267-residue protein sequence, read N- to C-terminus: Probable 3-methyl-2-oxobutanoate hydroxymethyltransferase (267 aa).

It belongs to the PanB family.

It catalyses the reaction 3-methyl-2-oxobutanoate + (6R)-5,10-methylene-5,6,7,8-tetrahydrofolate + H2O = 2-dehydropantoate + (6S)-5,6,7,8-tetrahydrofolate. Its pathway is cofactor biosynthesis; (R)-pantothenate biosynthesis; (R)-pantoate from 3-methyl-2-oxobutanoate: step 1/2. The chain is Probable 3-methyl-2-oxobutanoate hydroxymethyltransferase from Schizosaccharomyces pombe (strain 972 / ATCC 24843) (Fission yeast).